The sequence spans 298 residues: uncharacterized protein (298 aa).

The active site involves Asp119.

Belongs to the pseudouridine synthase RluA family.

It carries out the reaction a uridine in RNA = a pseudouridine in RNA. This is an uncharacterized protein from Helicobacter pylori (strain ATCC 700392 / 26695) (Campylobacter pylori).